A 94-amino-acid chain; its full sequence is Neurotoxin 213 (94 aa).

The signal sequence occupies residues 1–22 (MLKFILTCTSVILFTAVEDSSC). The LCN-type CS-alpha/beta domain occupies 24-88 (KGGNYPISVY…YWDYHRNNCK (65 aa)). Intrachain disulfides connect cysteine 39–cysteine 62, cysteine 48–cysteine 67, and cysteine 52–cysteine 69.

This sequence belongs to the long (3 C-C) scorpion toxin superfamily. As to expression, expressed by the venom gland.

The protein localises to the secreted. The polypeptide is Neurotoxin 213 (Lychas mucronatus (Chinese swimming scorpion)).